The chain runs to 360 residues: 3-dehydroquinate synthase (360 aa).

Residues Asp72–Lys77, Gly106–Asp110, Thr130–Thr131, Lys143, and Lys152 each bind NAD(+). Zn(2+) contacts are provided by Glu185, His248, and His265.

Belongs to the sugar phosphate cyclases superfamily. Dehydroquinate synthase family. Co(2+) serves as cofactor. Zn(2+) is required as a cofactor. It depends on NAD(+) as a cofactor.

The protein resides in the cytoplasm. The catalysed reaction is 7-phospho-2-dehydro-3-deoxy-D-arabino-heptonate = 3-dehydroquinate + phosphate. It participates in metabolic intermediate biosynthesis; chorismate biosynthesis; chorismate from D-erythrose 4-phosphate and phosphoenolpyruvate: step 2/7. In terms of biological role, catalyzes the conversion of 3-deoxy-D-arabino-heptulosonate 7-phosphate (DAHP) to dehydroquinate (DHQ). The chain is 3-dehydroquinate synthase from Geotalea uraniireducens (strain Rf4) (Geobacter uraniireducens).